A 317-amino-acid chain; its full sequence is Urease accessory protein 6 (317 aa).

This sequence belongs to the UreF family. URE4, URE6 and URE7 may form a complex that acts as a GTP-hydrolysis-dependent molecular chaperone, activating the urease apoprotein URE1.

In terms of biological role, urease accessory protein required for the maturation and activation of urease via the functional incorporation of the urease nickel metallocenter. Plays a role in host brain invasion. The polypeptide is Urease accessory protein 6 (Cryptococcus neoformans var. grubii serotype A (strain H99 / ATCC 208821 / CBS 10515 / FGSC 9487) (Filobasidiella neoformans var. grubii)).